We begin with the raw amino-acid sequence, 373 residues long: Anhydro-N-acetylmuramic acid kinase (373 aa).

Position 13 to 20 (13 to 20) interacts with ATP; the sequence is GTSMDGID.

This sequence belongs to the anhydro-N-acetylmuramic acid kinase family.

The catalysed reaction is 1,6-anhydro-N-acetyl-beta-muramate + ATP + H2O = N-acetyl-D-muramate 6-phosphate + ADP + H(+). Its pathway is amino-sugar metabolism; 1,6-anhydro-N-acetylmuramate degradation. The protein operates within cell wall biogenesis; peptidoglycan recycling. Its function is as follows. Catalyzes the specific phosphorylation of 1,6-anhydro-N-acetylmuramic acid (anhMurNAc) with the simultaneous cleavage of the 1,6-anhydro ring, generating MurNAc-6-P. Is required for the utilization of anhMurNAc either imported from the medium or derived from its own cell wall murein, and thus plays a role in cell wall recycling. This chain is Anhydro-N-acetylmuramic acid kinase, found in Brucella suis (strain ATCC 23445 / NCTC 10510).